A 677-amino-acid polypeptide reads, in one-letter code: Methionine--tRNA ligase (677 aa).

The 'HIGH' region signature appears at 15 to 25 (PYANGSIHLGH). 4 residues coordinate Zn(2+): C146, C149, C159, and C162. Residues 333-337 (KMSKS) carry the 'KMSKS' region motif. Residue K336 participates in ATP binding. Residues 575-677 (DFAKVDLRVA…AGAKPGHQVK (103 aa)) form the tRNA-binding domain.

The protein belongs to the class-I aminoacyl-tRNA synthetase family. MetG type 1 subfamily. Homodimer. Requires Zn(2+) as cofactor.

Its subcellular location is the cytoplasm. It catalyses the reaction tRNA(Met) + L-methionine + ATP = L-methionyl-tRNA(Met) + AMP + diphosphate. Functionally, is required not only for elongation of protein synthesis but also for the initiation of all mRNA translation through initiator tRNA(fMet) aminoacylation. The sequence is that of Methionine--tRNA ligase from Escherichia coli O17:K52:H18 (strain UMN026 / ExPEC).